The following is a 113-amino-acid chain: Vitelline membrane protein Vm32E (113 aa).

A signal peptide spans 1–17 (MKIVAFTLVAFVALAGA). Positions 33–70 (GYPAPPCPTNYLFSCQPNLAPVPCAQQAPAYGSAGAYT) constitute a VM domain.

The protein belongs to the vitelline membrane family.

The protein resides in the secreted. In terms of biological role, major early eggshell protein. The polypeptide is Vitelline membrane protein Vm32E (Drosophila erecta (Fruit fly)).